A 149-amino-acid polypeptide reads, in one-letter code: Large ribosomal subunit protein uL11 (149 aa).

It belongs to the universal ribosomal protein uL11 family. As to quaternary structure, part of the ribosomal stalk of the 50S ribosomal subunit. Interacts with L10 and the large rRNA to form the base of the stalk. L10 forms an elongated spine to which L12 dimers bind in a sequential fashion forming a multimeric L10(L12)X complex. In terms of processing, one or more lysine residues are methylated.

Forms part of the ribosomal stalk which helps the ribosome interact with GTP-bound translation factors. The sequence is that of Large ribosomal subunit protein uL11 from Azorhizobium caulinodans (strain ATCC 43989 / DSM 5975 / JCM 20966 / LMG 6465 / NBRC 14845 / NCIMB 13405 / ORS 571).